The chain runs to 494 residues: 4-trimethylaminobutyraldehyde dehydrogenase (494 aa).

An N-acetylserine modification is found at Ser-2. Lys-30 bears the N6-acetyllysine; alternate mark. An N6-succinyllysine; alternate modification is found at Lys-30. An N6-succinyllysine modification is found at Lys-59. NAD(+)-binding positions include Lys-180 and 232 to 236 (GSVPT). Glu-254 (proton acceptor) is an active-site residue. Cys-288 serves as the catalytic Nucleophile. The residue at position 298 (Lys-298) is an N6-acetyllysine. An NAD(+)-binding site is contributed by Glu-391.

This sequence belongs to the aldehyde dehydrogenase family. Homotetramer. In terms of tissue distribution, detected in lever (at protein level).

It is found in the cytoplasm. It localises to the cytosol. It catalyses the reaction 4-(trimethylamino)butanal + NAD(+) + H2O = 4-(trimethylamino)butanoate + NADH + 2 H(+). It carries out the reaction an aldehyde + NAD(+) + H2O = a carboxylate + NADH + 2 H(+). The enzyme catalyses 4-aminobutanal + NAD(+) + H2O = 4-aminobutanoate + NADH + 2 H(+). The catalysed reaction is formaldehyde + NAD(+) + H2O = formate + NADH + 2 H(+). It catalyses the reaction acetaldehyde + NAD(+) + H2O = acetate + NADH + 2 H(+). It carries out the reaction imidazole-4-acetaldehyde + NAD(+) + H2O = imidazole-4-acetate + NADH + 2 H(+). The enzyme catalyses acrolein + NAD(+) + H2O = acrylate + NADH + 2 H(+). The catalysed reaction is (5-hydroxyindol-3-yl)acetaldehyde + NAD(+) + H2O = (5-hydroxyindol-3-yl)acetate + NADH + 2 H(+). It catalyses the reaction 3,4-dihydroxyphenylacetaldehyde + NAD(+) + H2O = 3,4-dihydroxyphenylacetate + NADH + 2 H(+). It carries out the reaction spermine monoaldehyde + NAD(+) + H2O = N-(2-carboxyethyl)spermidine + NADH + 2 H(+). The enzyme catalyses propanal + NAD(+) + H2O = propanoate + NADH + 2 H(+). The catalysed reaction is butanal + NAD(+) + H2O = butanoate + NADH + 2 H(+). It catalyses the reaction pentanal + NAD(+) + H2O = pentanoate + NADH + 2 H(+). It carries out the reaction hexanal + NAD(+) + H2O = hexanoate + NADH + 2 H(+). The protein operates within amine and polyamine biosynthesis; carnitine biosynthesis. Functionally, converts gamma-trimethylaminobutyraldehyde into gamma-butyrobetaine with high efficiency (in vitro). Can catalyze the irreversible oxidation of a broad range of aldehydes to the corresponding acids in an NAD-dependent reaction, but with low efficiency. Catalyzes the oxidation of aldehydes arising from biogenic amines and polyamines. In Rattus norvegicus (Rat), this protein is 4-trimethylaminobutyraldehyde dehydrogenase (Aldh9a1).